A 171-amino-acid chain; its full sequence is Adenine phosphoribosyltransferase (171 aa).

The protein belongs to the purine/pyrimidine phosphoribosyltransferase family. Homodimer.

The protein localises to the cytoplasm. It carries out the reaction AMP + diphosphate = 5-phospho-alpha-D-ribose 1-diphosphate + adenine. Its pathway is purine metabolism; AMP biosynthesis via salvage pathway; AMP from adenine: step 1/1. In terms of biological role, catalyzes a salvage reaction resulting in the formation of AMP, that is energically less costly than de novo synthesis. In Citrifermentans bemidjiense (strain ATCC BAA-1014 / DSM 16622 / JCM 12645 / Bem) (Geobacter bemidjiensis), this protein is Adenine phosphoribosyltransferase.